We begin with the raw amino-acid sequence, 314 residues long: MPASLAAVKHKIDSTKSTRQITSAMQMVSTAKLNQIQHHTQTYEVYAEKVKQMLSDLVKSHSATSAASQDDVYAALFKKRAVKKTGVLVITSDRGLVGSYNSNIIKQTLDMMAKHNLDKDNTVFLTVGKTGTEFFKKRGMNVVYEYSGVSDVPTYREVHSIVKTAVQMYSDQVFDEMYMVYSHYVNRITSNVIVHDVLPITEKSLLDDENEAQENTELNNSDVSTAHVSAEYEFEPSDTEIISALVAQYAESLIYGAILDAKTSEHSSSANAMRSATDNADDIISTLELQYNRARQAAITTEITEITGGMTAQE.

This sequence belongs to the ATPase gamma chain family. In terms of assembly, F-type ATPases have 2 components, CF(1) - the catalytic core - and CF(0) - the membrane proton channel. CF(1) has five subunits: alpha(3), beta(3), gamma(1), delta(1), epsilon(1). CF(0) has three main subunits: a, b and c.

The protein resides in the cell membrane. Functionally, produces ATP from ADP in the presence of a proton gradient across the membrane. The gamma chain is believed to be important in regulating ATPase activity and the flow of protons through the CF(0) complex. The protein is ATP synthase gamma chain of Limosilactobacillus reuteri (strain DSM 20016) (Lactobacillus reuteri).